We begin with the raw amino-acid sequence, 292 residues long: Ribosomal protein L11 methyltransferase (292 aa).

Residues Thr-136, Gly-159, Asp-181, and Asn-228 each coordinate S-adenosyl-L-methionine.

It belongs to the methyltransferase superfamily. PrmA family.

It is found in the cytoplasm. It catalyses the reaction L-lysyl-[protein] + 3 S-adenosyl-L-methionine = N(6),N(6),N(6)-trimethyl-L-lysyl-[protein] + 3 S-adenosyl-L-homocysteine + 3 H(+). Its function is as follows. Methylates ribosomal protein L11. The polypeptide is Ribosomal protein L11 methyltransferase (Rhizobium johnstonii (strain DSM 114642 / LMG 32736 / 3841) (Rhizobium leguminosarum bv. viciae)).